Consider the following 224-residue polypeptide: uncharacterized protein (224 aa).

The signal sequence occupies residues 1-16 (MKILYSFLLLPFFSCA).

This is an uncharacterized protein from Escherichia coli.